The sequence spans 193 residues: ATP-dependent Clp protease proteolytic subunit 2 (193 aa).

S98 acts as the Nucleophile in catalysis. The active site involves H123.

The protein belongs to the peptidase S14 family. As to quaternary structure, fourteen ClpP subunits assemble into 2 heptameric rings which stack back to back to give a disk-like structure with a central cavity, resembling the structure of eukaryotic proteasomes.

The protein localises to the cytoplasm. It catalyses the reaction Hydrolysis of proteins to small peptides in the presence of ATP and magnesium. alpha-casein is the usual test substrate. In the absence of ATP, only oligopeptides shorter than five residues are hydrolyzed (such as succinyl-Leu-Tyr-|-NHMec, and Leu-Tyr-Leu-|-Tyr-Trp, in which cleavage of the -Tyr-|-Leu- and -Tyr-|-Trp bonds also occurs).. In terms of biological role, cleaves peptides in various proteins in a process that requires ATP hydrolysis. Has a chymotrypsin-like activity. Plays a major role in the degradation of misfolded proteins. This is ATP-dependent Clp protease proteolytic subunit 2 from Bacillus cereus (strain ATCC 14579 / DSM 31 / CCUG 7414 / JCM 2152 / NBRC 15305 / NCIMB 9373 / NCTC 2599 / NRRL B-3711).